The primary structure comprises 628 residues: UvrABC system protein C (628 aa).

The region spanning 20–99 (TSAGVYLMRD…IKTHKPRYNV (80 aa)) is the GIY-YIG domain. Residues 209-244 (AELLAQLEDQMQTAAAAMNFEHAARLRDRITGLNQL) form the UVR domain.

It belongs to the UvrC family. As to quaternary structure, interacts with UvrB in an incision complex.

Its subcellular location is the cytoplasm. Functionally, the UvrABC repair system catalyzes the recognition and processing of DNA lesions. UvrC both incises the 5' and 3' sides of the lesion. The N-terminal half is responsible for the 3' incision and the C-terminal half is responsible for the 5' incision. In Gloeobacter violaceus (strain ATCC 29082 / PCC 7421), this protein is UvrABC system protein C.